Reading from the N-terminus, the 282-residue chain is TPR repeat protein oca3 (282 aa).

4 TPR repeats span residues 16-50, 71-104, 139-172, and 174-211; these read IVAL…ALTT, PRVE…DPTH, LEAW…QPFE, and RLFA…CEEY.

The protein localises to the cytoplasm. Its subcellular location is the nucleus. Its function is as follows. May be involved in cell cycle regulation. The protein is TPR repeat protein oca3 (oca3) of Schizosaccharomyces pombe (strain 972 / ATCC 24843) (Fission yeast).